A 108-amino-acid polypeptide reads, in one-letter code: Ferredoxin, plant-type (108 aa).

Residues 5–96 (FEITVQPGGE…DLCIERYSKP (92 aa)) enclose the 2Fe-2S ferredoxin-type domain. [2Fe-2S] cluster is bound by residues Cys40, Cys45, Cys48, and Cys80.

Belongs to the 2Fe2S plant-type ferredoxin family.

It functions in the pathway aromatic compound metabolism; catechol degradation. Ferredoxins are iron-sulfur proteins that transfer electrons in a wide variety of metabolic reactions. This Pseudomonas putida (Arthrobacter siderocapsulatus) protein is Ferredoxin, plant-type (nahT).